Reading from the N-terminus, the 404-residue chain is F-box protein At3g57590 (404 aa).

An F-box domain is found at 1–47 (MEPIPNDLILEIFSRLPAKSVIGFRTLSKHWASILRSPVFTELFLTR).

This chain is F-box protein At3g57590, found in Arabidopsis thaliana (Mouse-ear cress).